Reading from the N-terminus, the 450-residue chain is tRNA-aminoacylation cofactor arc1 (450 aa).

Residues Gln208–Val278 form a disordered region. Composition is skewed to basic and acidic residues over residues Ile213–Pro225 and Ser233–Glu247. Over residues Lys248 to Lys261 the composition is skewed to basic residues. Residues Asp262–Pro272 show a composition bias toward basic and acidic residues. In terms of domain architecture, tRNA-binding spans Val278–Thr382.

It belongs to the tRNA-aminoacylation cofactor ARC1 family. As to quaternary structure, component of a yeast aminoacyl-tRNA synthase (aaRS) complex formed by methionyl-tRNA synthase, glutamyl-tRNA synthase and the tRNA aminoacylation cofactor arc1 in a stoichiometric complex. Interacts with rar1/mes1 and gus1.

The protein localises to the cytoplasm. Functionally, binds to tRNA and functions as a cofactor for the methionyl-tRNA synthetase (MetRS) and glutamyl-tRNA synthetase (GluRS). Forms a complex with MetRS and GluRS and increases their affinity for cognate tRNAs due to the presence of a tRNA binding domain in its middle and C-terminal part. The chain is tRNA-aminoacylation cofactor arc1 from Schizosaccharomyces pombe (strain 972 / ATCC 24843) (Fission yeast).